The chain runs to 256 residues: MYILRSCMEKKVLKIGQISDAHIGDDDRLVQDIDVRKNFLTAYNSESMKDLDLLVLSGDLADNASTDAYSFIAGVIKDSKVPVCIIPGNHDNLEVMEKVFDLKDKVHNGKCYYRYDLDGRSIFFLDSADGTVSSDQLSWLEQETAKIDGEVLLFLHHPPCLCGHKFMDLRYSMKNIAEVQATLSKIKNLKHIFVGHYHSEMTIQLEDKTVYVTPSTQMQIDPNITVFCLSSAAPRWRLIEWGENFMETKVYFSNTP.

The Fe cation site is built by Asp-20, His-22, Asp-59, Asn-89, His-156, His-196, and His-198. AMP contacts are provided by residues His-22, Asp-59, and 89 to 90; that span reads NH. AMP is bound at residue His-198.

The protein belongs to the cyclic nucleotide phosphodiesterase class-III family. Requires Fe(2+) as cofactor.

This Fibrobacter succinogenes (strain ATCC 19169 / S85) protein is Probable cyclic nucleotide phosphodiesterase Fisuc_1441/FSU_1912.